The following is a 628-amino-acid chain: EF-hand calcium-binding domain-containing protein 7 (628 aa).

Positions 1–22 (MASNPGSDAALGTQNPLLSGSP) are enriched in polar residues. Residues 1–24 (MASNPGSDAALGTQNPLLSGSPRT) form a disordered region. 2 consecutive EF-hand domains span residues 102 to 137 (TSKAELLKSFKKLDVNDDGAILHSDLQKYLTKRGEK) and 138 to 173 (MTQEEVNAVINLADINANGKFDYVKFCKLYMTTSEQ). The tract at residues 192-231 (QFGSHMEGSPERGPSPAPKPSPRVIRKNDQETFSSKGDTS) is disordered. A phosphoserine mark is found at S200 and S212. Over residues 222 to 231 (ETFSSKGDTS) the composition is skewed to polar residues. The region spanning 402-437 (EFRSTLSEIFEVIDLDGNGLISLEEYNFFELRTSGE) is the EF-hand 3 domain. The Ca(2+) site is built by D415, D417, N419, and E426.

As to quaternary structure, component of the EvC complex composed of EFCAB7, IQCE, EVC2 and EVC; built from two subcomplexes, EVC2:EVC and EFCAB7:IQCE. Interacts (via EF-hand 1 and 2) with IQCE (via N-terminus); this interaction anchors the EVC-EVC2 complex in a signaling microdomain at the base of cilia and stimulates the Hedgehog (Hh) pathway. Interacts with EVC2 (via N-terminal end). Interacts with EVC.

It localises to the cell projection. The protein localises to the cilium membrane. Component of the EvC complex that positively regulates ciliary Hedgehog (Hh) signaling. Required for the localization of the EVC2:EVC subcomplex at the base of primary cilia. This Mus musculus (Mouse) protein is EF-hand calcium-binding domain-containing protein 7 (Efcab7).